The following is a 273-amino-acid chain: Dermonecrotic toxin LsaSicTox-alphaIB1ai (273 aa).

The active site involves H5. Positions 25 and 27 each coordinate Mg(2+). Catalysis depends on H41, which acts as the Nucleophile. 2 disulfide bridges follow: C45-C51 and C47-C190. Position 85 (D85) interacts with Mg(2+).

This sequence belongs to the arthropod phospholipase D family. Class II subfamily. Mg(2+) serves as cofactor. Expressed by the venom gland.

It localises to the secreted. The catalysed reaction is an N-(acyl)-sphingosylphosphocholine = an N-(acyl)-sphingosyl-1,3-cyclic phosphate + choline. The enzyme catalyses an N-(acyl)-sphingosylphosphoethanolamine = an N-(acyl)-sphingosyl-1,3-cyclic phosphate + ethanolamine. It carries out the reaction a 1-acyl-sn-glycero-3-phosphocholine = a 1-acyl-sn-glycero-2,3-cyclic phosphate + choline. It catalyses the reaction a 1-acyl-sn-glycero-3-phosphoethanolamine = a 1-acyl-sn-glycero-2,3-cyclic phosphate + ethanolamine. Dermonecrotic toxins cleave the phosphodiester linkage between the phosphate and headgroup of certain phospholipids (sphingolipid and lysolipid substrates), forming an alcohol (often choline) and a cyclic phosphate. This toxin acts on sphingomyelin (SM). It may also act on ceramide phosphoethanolamine (CPE), lysophosphatidylcholine (LPC) and lysophosphatidylethanolamine (LPE), but not on lysophosphatidylserine (LPS), and lysophosphatidylglycerol (LPG). It acts by transphosphatidylation, releasing exclusively cyclic phosphate products as second products. Induces dermonecrosis, hemolysis, increased vascular permeability, edema, inflammatory response, and platelet aggregation. This is Dermonecrotic toxin LsaSicTox-alphaIB1ai from Loxosceles sabina (Tucson recluse spider).